Reading from the N-terminus, the 553-residue chain is CTP synthase (553 aa).

The amidoligase domain stretch occupies residues 1–266; that stretch reads MKYIFVTGGV…GKAVEDLLGL (266 aa). Ser-12 is a binding site for CTP. Position 12 (Ser-12) interacts with UTP. 13–18 provides a ligand contact to ATP; it reads SLGKGV. L-glutamine is bound at residue Tyr-53. Asp-70 provides a ligand contact to ATP. Residues Asp-70 and Glu-140 each contribute to the Mg(2+) site. CTP-binding positions include 147-149, 187-192, and Lys-223; these read DIE and KTKPTQ. Residues 187-192 and Lys-223 contribute to the UTP site; that span reads KTKPTQ. The region spanning 291 to 541 is the Glutamine amidotransferase type-1 domain; sequence TIAIAGKYTE…VAAALQSGPS (251 aa). Gly-353 contributes to the L-glutamine binding site. Catalysis depends on Cys-380, which acts as the Nucleophile; for glutamine hydrolysis. L-glutamine-binding positions include 381–384, Glu-404, and Arg-464; that span reads LGMQ. Residues His-514 and Glu-516 contribute to the active site.

Belongs to the CTP synthase family. In terms of assembly, homotetramer.

The catalysed reaction is UTP + L-glutamine + ATP + H2O = CTP + L-glutamate + ADP + phosphate + 2 H(+). It catalyses the reaction L-glutamine + H2O = L-glutamate + NH4(+). It carries out the reaction UTP + NH4(+) + ATP = CTP + ADP + phosphate + 2 H(+). The protein operates within pyrimidine metabolism; CTP biosynthesis via de novo pathway; CTP from UDP: step 2/2. With respect to regulation, allosterically activated by GTP, when glutamine is the substrate; GTP has no effect on the reaction when ammonia is the substrate. The allosteric effector GTP functions by stabilizing the protein conformation that binds the tetrahedral intermediate(s) formed during glutamine hydrolysis. Inhibited by the product CTP, via allosteric rather than competitive inhibition. Its function is as follows. Catalyzes the ATP-dependent amination of UTP to CTP with either L-glutamine or ammonia as the source of nitrogen. Regulates intracellular CTP levels through interactions with the four ribonucleotide triphosphates. The polypeptide is CTP synthase (Deinococcus geothermalis (strain DSM 11300 / CIP 105573 / AG-3a)).